The sequence spans 321 residues: Oxidoreductase P35 (321 aa).

The protein belongs to the Gfo/Idh/MocA family.

Its subcellular location is the cell surface. In terms of biological role, oxidoreductase that may be involved in ulvan degradation. Ulvan is the main polysaccharide component of the Ulvales (green seaweed) cell wall. It is composed of disaccharide building blocks comprising 3-sulfated rhamnose (Rha3S) linked to D-glucuronic acid (GlcA), L-iduronic acid (IduA), or D-xylose (Xyl). In Formosa agariphila (strain DSM 15362 / KCTC 12365 / LMG 23005 / KMM 3901 / M-2Alg 35-1), this protein is Oxidoreductase P35.